The chain runs to 201 residues: Translation initiation factor IF-3 (201 aa).

The protein belongs to the IF-3 family. In terms of assembly, monomer.

Its subcellular location is the cytoplasm. Its function is as follows. IF-3 binds to the 30S ribosomal subunit and shifts the equilibrium between 70S ribosomes and their 50S and 30S subunits in favor of the free subunits, thus enhancing the availability of 30S subunits on which protein synthesis initiation begins. The chain is Translation initiation factor IF-3 from Prochlorococcus marinus (strain SARG / CCMP1375 / SS120).